Here is a 498-residue protein sequence, read N- to C-terminus: Histidine--tRNA ligase (498 aa).

It belongs to the class-II aminoacyl-tRNA synthetase family. In terms of assembly, homodimer.

It is found in the cytoplasm. It carries out the reaction tRNA(His) + L-histidine + ATP = L-histidyl-tRNA(His) + AMP + diphosphate + H(+). The sequence is that of Histidine--tRNA ligase from Mycoplasmopsis synoviae (strain 53) (Mycoplasma synoviae).